The following is a 111-amino-acid chain: Cytochrome b-c1 complex subunit 7 (111 aa).

An N-acetylalanine modification is found at Ala-2. Residue Lys-12 is modified to N6-acetyllysine; alternate. Lys-12 is subject to N6-succinyllysine; alternate. Lys-19 carries the post-translational modification N6-acetyllysine. Lys-78 bears the N6-acetyllysine; alternate mark. Lys-78 is subject to N6-succinyllysine; alternate. Lys-83 is modified (N6-acetyllysine). N6-acetyllysine; alternate is present on Lys-88. At Lys-88 the chain carries N6-succinyllysine; alternate. An N6-acetyllysine modification is found at Lys-96.

It belongs to the UQCRB/QCR7 family. In terms of assembly, component of the ubiquinol-cytochrome c oxidoreductase (cytochrome b-c1 complex, complex III, CIII), a multisubunit enzyme composed of 11 subunits. The complex is composed of 3 respiratory subunits cytochrome b, cytochrome c1 and Rieske protein UQCRFS1, 2 core protein subunits UQCRC1/QCR1 and UQCRC2/QCR2, and 6 low-molecular weight protein subunits UQCRH/QCR6, UQCRB/QCR7, UQCRQ/QCR8, UQCR10/QCR9, UQCR11/QCR10 and subunit 9, the cleavage product of Rieske protein UQCRFS1. The complex exists as an obligatory dimer and forms supercomplexes (SCs) in the inner mitochondrial membrane with NADH-ubiquinone oxidoreductase (complex I, CI) and cytochrome c oxidase (complex IV, CIV), resulting in different assemblies (supercomplex SCI(1)III(2)IV(1) and megacomplex MCI(2)III(2)IV(2)).

The protein localises to the mitochondrion inner membrane. In terms of biological role, component of the ubiquinol-cytochrome c oxidoreductase, a multisubunit transmembrane complex that is part of the mitochondrial electron transport chain which drives oxidative phosphorylation. The respiratory chain contains 3 multisubunit complexes succinate dehydrogenase (complex II, CII), ubiquinol-cytochrome c oxidoreductase (cytochrome b-c1 complex, complex III, CIII) and cytochrome c oxidase (complex IV, CIV), that cooperate to transfer electrons derived from NADH and succinate to molecular oxygen, creating an electrochemical gradient over the inner membrane that drives transmembrane transport and the ATP synthase. The cytochrome b-c1 complex catalyzes electron transfer from ubiquinol to cytochrome c, linking this redox reaction to translocation of protons across the mitochondrial inner membrane, with protons being carried across the membrane as hydrogens on the quinol. In the process called Q cycle, 2 protons are consumed from the matrix, 4 protons are released into the intermembrane space and 2 electrons are passed to cytochrome c. The chain is Cytochrome b-c1 complex subunit 7 (Uqcrb) from Mus musculus (Mouse).